Consider the following 400-residue polypeptide: Large envelope protein (400 aa).

An N-acetylmethionine modification is found at M1. Disordered stretches follow at residues 1-42 (MGGY…NNPD) and 84-118 (ILTT…SHPQ). A lipid anchor (N-myristoyl glycine; by host) is attached at G2. Positions 2 to 119 (GGYSSKPRKG…PPLRDSHPQA (118 aa)) are pre-S1. Residues 2–174 (GGYSSKPRKG…FSRTGDPVPK (173 aa)) are pre-S. At 2–181 (GGYSSKPRKG…VPKMENTTSG (180 aa)) the chain is on the virion surface; in external conformation side. The Intravirion; in internal conformation portion of the chain corresponds to 2-253 (GGYSSKPRKG…PGYRWMCLRR (252 aa)). A glycan (N-linked (GlcNAc...) asparagine) is linked at Y4. The interval 120-174 (MQWNSTTFHQALLDPRVRGLYFPAGGSSSGTANPVPTTASPISSIFSRTGDPVPK) is pre-S2. A helical transmembrane segment spans residues 182–202 (FLGPLLVLQAGFFLLTRILTI). Topologically, residues 203–253 (PQSLDSWWTSLNFLGGAPACPGQNSQSPTSNHSPTSCPPICPGYRWMCLRR) are intravirion; in external conformation. Residues 254–274 (FIIFLFILLLCLIFLLVLLDY) traverse the membrane as a helical segment. Residues 275-348 (QGMLPVCPLI…WASVRFSWLS (74 aa)) lie on the Virion surface side of the membrane. N-linked (GlcNAc...) asparagine; by host glycosylation is present at N320. A helical membrane pass occupies residues 349–369 (LLAPFVQWFVGLSPTVWLSVI). At 370-375 (WMMWYW) the chain is on the intravirion side. Residues 376 to 398 (GPSLYNILSPFLPLLPIFFCLWV) traverse the membrane as a helical segment. At 399-400 (YI) the chain is on the virion surface side.

This sequence belongs to the orthohepadnavirus major surface antigen family. As to quaternary structure, in its internal form (Li-HBsAg), interacts with the capsid protein and with the isoform S. Interacts with host chaperone CANX. Associates with host chaperone CANX through its pre-S2 N glycan; this association may be essential for isoform M proper secretion. In terms of assembly, interacts with isoform L. Interacts with the antigens of satellite virus HDV (HDVAgs); this interaction is required for encapsidation of HDV genomic RNA. Isoform M is N-terminally acetylated by host at a ratio of 90%, and N-glycosylated by host at the pre-S2 region. In terms of processing, myristoylated.

It localises to the virion membrane. Its function is as follows. The large envelope protein exists in two topological conformations, one which is termed 'external' or Le-HBsAg and the other 'internal' or Li-HBsAg. In its external conformation the protein attaches the virus to cell receptors and thereby initiating infection. This interaction determines the species specificity and liver tropism. This attachment induces virion internalization predominantly through caveolin-mediated endocytosis. The large envelope protein also assures fusion between virion membrane and endosomal membrane. In its internal conformation the protein plays a role in virion morphogenesis and mediates the contact with the nucleocapsid like a matrix protein. The middle envelope protein plays an important role in the budding of the virion. It is involved in the induction of budding in a nucleocapsid independent way. In this process the majority of envelope proteins bud to form subviral lipoprotein particles of 22 nm of diameter that do not contain a nucleocapsid. The polypeptide is Large envelope protein (Homo sapiens (Human)).